The sequence spans 173 residues: Aliphatic sulfonate oxidoreductase, polyferredoxin-like subunit (173 aa).

4Fe-4S ferredoxin-type domains are found at residues 9–40, 48–80, and 82–111; these read IWILITPDKCSGCRLCEVTCSLEHEGIIWPEA, LFPGINVPHTCVQCPDYPCVNACPTNALSVDEK, and GAVVVNEEKCITCGACVLACPGKVPRIPAG. Residues cysteine 18, cysteine 21, cysteine 24, cysteine 28, cysteine 58, cysteine 61, cysteine 66, cysteine 70, cysteine 91, cysteine 94, cysteine 97, cysteine 101, cysteine 118, cysteine 121, cysteine 127, and cysteine 131 each coordinate [4Fe-4S] cluster.

In terms of assembly, heterodimer composed of a small WOR5-S subunit, with four [4Fe-4S] clusters, and a large WOR5-L subunit, containing the active site tungsto-bispyranopterin cofactor as well as another [4Fe-4S] cluster. The cofactor is [4Fe-4S] cluster.

The protein localises to the cytoplasm. In terms of biological role, polyferredoxin-like subunit of an oxidoreductase that can desulfonate and oxidize aliphatic sulfonates such as taurine. May serve as a an electron-transfer subunit between the catalytic subunit and ferredoxin. This Pyrococcus furiosus (strain ATCC 43587 / DSM 3638 / JCM 8422 / Vc1) protein is Aliphatic sulfonate oxidoreductase, polyferredoxin-like subunit.